Here is a 125-residue protein sequence, read N- to C-terminus: Small ribosomal subunit protein uS12m (125 aa).

Disordered stretches follow at residues 1 to 29 (MPTKNQLIRHGREEKQRTDRTRASDQCPQ) and 105 to 125 (LGIPDRRKGRSKYGAERPKSK). Basic and acidic residues predominate over residues 10–23 (HGREEKQRTDRTRA).

This sequence belongs to the universal ribosomal protein uS12 family.

Its subcellular location is the mitochondrion. Its function is as follows. Protein S12 is involved in the translation initiation step. This Oryza sativa subsp. japonica (Rice) protein is Small ribosomal subunit protein uS12m (RPS12).